Consider the following 101-residue polypeptide: Urease subunit beta (101 aa).

Belongs to the urease beta subunit family. In terms of assembly, heterotrimer of UreA (gamma), UreB (beta) and UreC (alpha) subunits. Three heterotrimers associate to form the active enzyme.

It localises to the cytoplasm. The enzyme catalyses urea + 2 H2O + H(+) = hydrogencarbonate + 2 NH4(+). It functions in the pathway nitrogen metabolism; urea degradation; CO(2) and NH(3) from urea (urease route): step 1/1. This is Urease subunit beta from Pseudomonas paraeruginosa (strain DSM 24068 / PA7) (Pseudomonas aeruginosa (strain PA7)).